We begin with the raw amino-acid sequence, 183 residues long: Ribosome rescue factor SmrB (183 aa).

The 76-residue stretch at 98–173 folds into the Smr domain; the sequence is LDLHGLTQQQ…GDAALLVLIE (76 aa).

It belongs to the SmrB family. In terms of assembly, associates with collided ribosomes, but not with correctly translating polysomes.

Its function is as follows. Acts as a ribosome collision sensor. Detects stalled/collided disomes (pairs of ribosomes where the leading ribosome is stalled and a second ribosome has collided with it) and endonucleolytically cleaves mRNA at the 5' boundary of the stalled ribosome. Stalled/collided disomes form a new interface (primarily via the 30S subunits) that binds SmrB. Cleaved mRNA becomes available for tmRNA ligation, leading to ribosomal subunit dissociation and rescue of stalled ribosomes. This chain is Ribosome rescue factor SmrB, found in Klebsiella pneumoniae (strain 342).